Reading from the N-terminus, the 786-residue chain is Probable glutamine--tRNA ligase (786 aa).

Positions 181–198 (DLAPKKKEKKPEGPKPSK) are enriched in basic and acidic residues. A disordered region spans residues 181-218 (DLAPKKKEKKPEGPKPSKDAAAAATAPGTKNQKEASPE). Residues 276–286 (PEPNGVLHIGH) carry the 'HIGH' region motif. Residues 277-279 (EPN) and 283-289 (HIGHAKA) contribute to the ATP site. L-glutamine contacts are provided by Asp-309 and Tyr-444. ATP is bound by residues Thr-463, 492–493 (RL), and 500–502 (VSK). Positions 499 to 503 (VVSKR) match the 'KMSKS' region motif.

Belongs to the class-I aminoacyl-tRNA synthetase family.

It catalyses the reaction tRNA(Gln) + L-glutamine + ATP = L-glutaminyl-tRNA(Gln) + AMP + diphosphate. The protein is Probable glutamine--tRNA ligase of Caenorhabditis elegans.